A 343-amino-acid polypeptide reads, in one-letter code: Phosphoribosylformylglycinamidine cyclo-ligase (343 aa).

The protein belongs to the AIR synthase family.

Its subcellular location is the cytoplasm. The catalysed reaction is 2-formamido-N(1)-(5-O-phospho-beta-D-ribosyl)acetamidine + ATP = 5-amino-1-(5-phospho-beta-D-ribosyl)imidazole + ADP + phosphate + H(+). Its pathway is purine metabolism; IMP biosynthesis via de novo pathway; 5-amino-1-(5-phospho-D-ribosyl)imidazole from N(2)-formyl-N(1)-(5-phospho-D-ribosyl)glycinamide: step 2/2. The protein is Phosphoribosylformylglycinamidine cyclo-ligase of Parasynechococcus marenigrum (strain WH8102).